We begin with the raw amino-acid sequence, 575 residues long: Intermediate filament protein ifd-1 (575 aa).

A head region spans residues 1–56; the sequence is MSKLNPRVAHNPVLSRIIESGRTNLPSGITSAGSLSAYAQAAAVTIRDNRDREKRE. Positions 53 to 406 constitute an IF rod domain; the sequence is EKREIADLNN…KLMEQAENLR (354 aa). The tract at residues 57–88 is coil 1A; the sequence is IADLNNRLARYVEKVRFLEAQNRVLENDIGLF. A linker 1 region spans residues 89–102; it reads RQAAHIHTGKVRDY. Residues 103–240 are coil 1B; it reads YDAEKTSLAT…STHEIAIREE (138 aa). The interval 241 to 258 is linker 12; the sequence is INKARRDSTDKNREFFHR. Positions 259 to 408 are coil 2; that stretch reads ELHMSMKEIR…MEQAENLRTS (150 aa). The tract at residues 409-572 is tail; the sequence is YQSDFVIDTP…DEVGWYAHVS (164 aa). The 117-residue stretch at 459–575 folds into the LTD domain; it reads NTQQFRSYGK…GWYAHVSYSH (117 aa).

Belongs to the intermediate filament family.

Its subcellular location is the cytoplasm. In terms of biological role, cytoplasmic intermediate filaments provide mechanical strength to cells. Not essential protein. The protein is Intermediate filament protein ifd-1 of Caenorhabditis elegans.